A 449-amino-acid chain; its full sequence is Endoglucanase A (449 aa).

The tat-type signal signal peptide spans Met-1 to Ala-31. The 106-residue stretch at Ala-32 to Thr-137 folds into the CBM2 domain. Cys-35 and Cys-134 form a disulfide bridge. The interval Phe-127–Pro-170 is disordered. Positions Thr-132–Thr-141 are enriched in low complexity. The interval Pro-139–Pro-168 is linker ('hinge') (Pro-Thr box). The span at Ser-142–Thr-167 shows a compositional bias: pro residues. Asp-247 is a catalytic residue. 2 disulfide bridges follow: Cys-248/Cys-291 and Cys-390/Cys-426. The Proton donor role is filled by Asp-283. The Nucleophile role is filled by Asp-423. Residues Glu-438–Trp-449 form a catalytic region.

The protein belongs to the glycosyl hydrolase 6 (cellulase B) family. The linker region (also termed 'hinge') may be a potential site for proteolysis. In terms of processing, predicted to be exported by the Tat system. The position of the signal peptide cleavage has not been experimentally proven.

It catalyses the reaction Endohydrolysis of (1-&gt;4)-beta-D-glucosidic linkages in cellulose, lichenin and cereal beta-D-glucans.. In terms of biological role, the biological conversion of cellulose to glucose generally requires three types of hydrolytic enzymes: (1) Endoglucanases which cut internal beta-1,4-glucosidic bonds; (2) Exocellobiohydrolases that cut the disaccharide cellobiose from the non-reducing end of the cellulose polymer chain; (3) Beta-1,4-glucosidases which hydrolyze the cellobiose and other short cello-oligosaccharides to glucose. This Cellulomonas fimi protein is Endoglucanase A (cenA).